A 957-amino-acid polypeptide reads, in one-letter code: Glycine dehydrogenase (decarboxylating) (957 aa).

At Lys-702 the chain carries N6-(pyridoxal phosphate)lysine.

Belongs to the GcvP family. In terms of assembly, the glycine cleavage system is composed of four proteins: P, T, L and H. Requires pyridoxal 5'-phosphate as cofactor.

The enzyme catalyses N(6)-[(R)-lipoyl]-L-lysyl-[glycine-cleavage complex H protein] + glycine + H(+) = N(6)-[(R)-S(8)-aminomethyldihydrolipoyl]-L-lysyl-[glycine-cleavage complex H protein] + CO2. The glycine cleavage system catalyzes the degradation of glycine. The P protein binds the alpha-amino group of glycine through its pyridoxal phosphate cofactor; CO(2) is released and the remaining methylamine moiety is then transferred to the lipoamide cofactor of the H protein. The chain is Glycine dehydrogenase (decarboxylating) from Bradyrhizobium sp. (strain ORS 278).